Reading from the N-terminus, the 197-residue chain is TDAXNPPEGPQDRGSQQKGRLSLQNTAEIQHCLVNAGDVGCGVFECFENNXCXIXXLHXISFIKAHALRFGCISREMVFQLQRECYLKHDLCMINFRDLLLHEPYVDLVNLLLTCGEDVKEAVTRSIQAQCEQNWGGLCSILSFCTSNVQRPXAXQPXADRAQVSRPHHHDTGHHLLEAIXGAKGERGSKSHPSVRA.

The tract at residues 1-20 (TDAXNPPEGPQDRGSQQKGR) is disordered.

This sequence belongs to the stanniocalcin family. In terms of assembly, homodimer; disulfide-linked.

It localises to the secreted. Has an anti-hypocalcemic action on calcium and phosphate homeostasis. This chain is Stanniocalcin-2 (STC2), found in Cavia porcellus (Guinea pig).